A 461-amino-acid polypeptide reads, in one-letter code: MALSMKMRANARVSGRRVAAVAPRVVPFSSASSSVLRSGFALRCLWTSAAWAALASVVEAVKKSVGDLHKADLEGKRVFVRADLNVPLDKATLAITDDTRIRAAVPTLKYLLDNGAKVLLTSHLGRPKGGPEDKYRLTPVVARLSELLGKPVTKVDDCIGPEVEKAVGAMKNGELLLLENCRFYKEEEKNEPEFAKKLAANADLYVNDAFGTAHRAHASTEGVTKFLKPSVAGFLLQKELDYLDGAVSNPKRPFVAIVGGSKVSSKITVIEALMEKCDKIIIGGGMIFTFYKARALKVGSSLVEDDKIELAKKLEEMAKAKGVQLLLPTDVVVADKFDANANTQTVPITAIPDGWMGLDIGPDSVKTFNDALADAKTVVWNGPMGVFEFPQVRQRTVSIANTLAGLTPKGCITIIGGGDSVAAVEQAGVAEKMSHISTGGGASLELLEGKVLPGVAALDEK.

A chloroplast-targeting transit peptide spans 1–60 (MALSMKMRANARVSGRRVAAVAPRVVPFSSASSSVLRSGFALRCLWTSAAWAALASVVEA). The (2R)-3-phosphoglycerate site is built by Ala-82, Asp-83, Asn-85, Arg-100, Ser-122, His-123, Gly-125, Arg-126, Arg-182, His-214, and Arg-215. Gly-260 lines the ADP pocket. Gly-260 is a CDP binding site. The AMP site is built by Lys-262 and Lys-266. Lys-266 is an ATP binding site. Gly-284 is a binding site for ADP. Gly-284 contributes to the CDP binding site. AMP contacts are provided by Gly-285 and Gly-357. Positions 285 and 357 each coordinate ATP. Positions 382 and 387 each coordinate CDP. Phe-387 contacts ADP. Glu-388 lines the AMP pocket. Glu-388, Asp-419, and Ser-420 together coordinate ATP. Asp-419 provides a ligand contact to Mg(2+).

The protein belongs to the phosphoglycerate kinase family. In terms of assembly, monomer. Requires Mg(2+) as cofactor.

The protein localises to the plastid. It is found in the chloroplast. The catalysed reaction is (2R)-3-phosphoglycerate + ATP = (2R)-3-phospho-glyceroyl phosphate + ADP. It functions in the pathway carbohydrate biosynthesis; Calvin cycle. This Chlamydomonas reinhardtii (Chlamydomonas smithii) protein is Phosphoglycerate kinase, chloroplastic.